A 975-amino-acid chain; its full sequence is Leucine-zipper-like transcriptional regulator 1 homolog (975 aa).

The span at 16-32 shows a compositional bias: gly residues; sequence RGGGGGGCGGGGAGGSA. Disordered stretches follow at residues 16-41 and 158-186; these read RGGG…TSGS and MSSS…SCSS. Residues 174 to 186 are compositionally biased toward low complexity; the sequence is ASSSHPPGSSCSS. Kelch repeat units lie at residues 263–312, 314–369, 370–417, 421–467, 478–524, and 530–581; these read AMFV…VAGS, MFIF…VYDN, KMWI…PVAV, AMYV…PSRR, FLYV…FHAS, and AMYI…FIVG. 2 BTB domains span residues 574 to 670 and 801 to 870; these read CDIQ…DLKD and CDIS…KMPP.

Belongs to the LZTR1 family. As to quaternary structure, component of some BCR (BTB-CUL3-RBX1) E3 ubiquitin-protein ligase complex. As to expression, expressed in Rdl-expressing neurons of the mushroom body, the neurons projecting to the LC9 optic glomerulus and in a neuronal cluster near the subesophageal ganglion (at protein level).

It participates in protein modification; protein ubiquitination. Functionally, inhibitor of Ras signaling. Acts as a substrate-specific adapter of a BCR (BTB-CUL3-RBX1) E3 ubiquitin-protein ligase complex that mediates ubiquitination of Ras. Together with Nf1, plays an important role for normal sleep behavior, mainly during the night. Might affect sleep by modulating GABA signaling in Rdl-expressing neurons. Might play a role in the regulation of brain glycogen metabolism and organismal levels of triglycerides. The protein is Leucine-zipper-like transcriptional regulator 1 homolog of Drosophila melanogaster (Fruit fly).